The following is a 94-amino-acid chain: Co-chaperonin GroES (94 aa).

The protein belongs to the GroES chaperonin family. Heptamer of 7 subunits arranged in a ring. Interacts with the chaperonin GroEL.

The protein localises to the cytoplasm. In terms of biological role, together with the chaperonin GroEL, plays an essential role in assisting protein folding. The GroEL-GroES system forms a nano-cage that allows encapsulation of the non-native substrate proteins and provides a physical environment optimized to promote and accelerate protein folding. GroES binds to the apical surface of the GroEL ring, thereby capping the opening of the GroEL channel. This chain is Co-chaperonin GroES, found in Bacillus subtilis (strain 168).